We begin with the raw amino-acid sequence, 305 residues long: Nitrogen assimilation regulatory protein nac (305 aa).

The HTH lysR-type domain maps to 1–58 (MNFRRLKYFVKIVDIGSLTQAAEVLHIAQPALSQQVATLEGELNQQLLIRTKRGVTPT). The H-T-H motif DNA-binding region spans 18-37 (LTQAAEVLHIAQPALSQQVA).

This sequence belongs to the LysR transcriptional regulatory family.

In terms of biological role, transcriptional activator for the hut, put and ure operons and repressor for the gdh and gltB operons in response to nitrogen limitation. Negative regulator of its own expression. This Escherichia coli (strain K12) protein is Nitrogen assimilation regulatory protein nac (nac).